The primary structure comprises 1357 residues: Mediator of RNA polymerase II transcription subunit 13 (1357 aa).

Disordered stretches follow at residues 356–391 and 420–487; these read SCNY…GNGF and DLWN…HRKE. The segment covering 435-451 has biased composition (polar residues); that stretch reads INPTSQQGDSARITSGS.

Belongs to the Mediator complex subunit 13 family. In terms of assembly, component of the SRB8-11 complex, which itself associates with the Mediator complex.

It localises to the nucleus. Component of the SRB8-11 complex. The SRB8-11 complex is a regulatory module of the Mediator complex which is itself involved in regulation of basal and activated RNA polymerase II-dependent transcription. The SRB8-11 complex may be involved in the transcriptional repression of a subset of genes regulated by Mediator. It may inhibit the association of the Mediator complex with RNA polymerase II to form the holoenzyme complex. This is Mediator of RNA polymerase II transcription subunit 13 (SSN2) from Eremothecium gossypii (strain ATCC 10895 / CBS 109.51 / FGSC 9923 / NRRL Y-1056) (Yeast).